We begin with the raw amino-acid sequence, 217 residues long: Harpin secretion protein HrcR (217 aa).

Transmembrane regions (helical) follow at residues phenylalanine 11–phenylalanine 31, proline 52–phenylalanine 72, isoleucine 158–leucine 178, and valine 185–tryptophan 205.

The protein belongs to the FliP/MopC/SpaP family.

It is found in the cell membrane. Functionally, required for the secretion of harpin. This chain is Harpin secretion protein HrcR (hrcR), found in Erwinia amylovora (Fire blight bacteria).